The chain runs to 101 residues: Small ribosomal subunit protein uS14 (101 aa).

Belongs to the universal ribosomal protein uS14 family. As to quaternary structure, part of the 30S ribosomal subunit. Contacts proteins S3 and S10.

Functionally, binds 16S rRNA, required for the assembly of 30S particles and may also be responsible for determining the conformation of the 16S rRNA at the A site. The sequence is that of Small ribosomal subunit protein uS14 from Francisella tularensis subsp. holarctica (strain FTNF002-00 / FTA).